A 291-amino-acid polypeptide reads, in one-letter code: Ribosome biogenesis protein BRX1 (291 aa).

The Brix domain maps to 31–232 (QRTLLISSRG…VILILEGSFG (202 aa)). Position 285 is a phosphoserine (Ser-285).

The protein belongs to the BRX1 family. As to quaternary structure, part of a complex that includes BRX1, RPF1, RPF2 and SSF1 or SSF2.

It is found in the nucleus. Its subcellular location is the nucleolus. Required for biogenesis of the 60S ribosomal subunit. The chain is Ribosome biogenesis protein BRX1 (BRX1) from Saccharomyces cerevisiae (strain ATCC 204508 / S288c) (Baker's yeast).